Here is a 1174-residue protein sequence, read N- to C-terminus: K(+) efflux antiporter 2, chloroplastic (1174 aa).

Residues 1–57 (MDFASSVQRQSMFHGGADFASYCLPNRMISAKLCPKGLGGTRFWDPMIDSKVRSAIR) constitute a chloroplast transit peptide. Residues 58–565 (SKRNVSYRSS…MFPQQEVNEE (508 aa)) are Stromal-facing. Positions 119-141 (GSDDREVTFSKEEKDTREQDSAP) are disordered. Residues 142–350 (SLEELRDLLN…ALQRAEKTLF (209 aa)) adopt a coiled-coil conformation. At Lys170 the chain carries N6-acetyllysine; by NSI. Basic and acidic residues predominate over residues 420–448 (EAEGEAEKSKNVVLTKKQEVQKDLPRESS). A disordered region spans residues 420–457 (EAEGEAEKSKNVVLTKKQEVQKDLPRESSSHNGTKTSL). Residues 566–586 (EASLLDVLWLLLASVIFVPLF) form a helical membrane-spanning segment. Topologically, residues 587–592 (QKIPGG) are chloroplast intermembrane. The chain crosses the membrane as a helical span at residues 593–613 (SPVLGYLAAGILIGPYGLSII). Residues 614–620 (RNVHGTK) lie on the Stromal side of the membrane. Residues 621–641 (AIAEFGVVFLLFNIGLELSVE) traverse the membrane as a helical segment. The Chloroplast intermembrane portion of the chain corresponds to 642–648 (RLSSMKK). A helical membrane pass occupies residues 649 to 669 (YVFGLGSAQVLVTAAVIGLIT). The Stromal portion of the chain corresponds to 670–678 (HYVAGQAGP). The helical transmembrane segment at 679–699 (AAIVIGNGLALSSTAVVLQVL) threads the bilayer. Topologically, residues 700–713 (QERGESTSRHGRAT) are chloroplast intermembrane. Residues 714–734 (FSVLLFQDLAVVVLLILIPLI) traverse the membrane as a helical segment. Topologically, residues 735–746 (SPNSSKGGIGFQ) are stromal. The helical transmembrane segment at 747-767 (AIAEALGLAAIKAAVAITGII) threads the bilayer. The Chloroplast intermembrane segment spans residues 768 to 807 (AGGRLLLRPIYKQIAENRNAEIFSANTLLVILGTSLLTAR). A helical transmembrane segment spans residues 808-828 (AGLSMALGAFLAGLLLAETEF). Over 829–841 (SLQVESDIAPYRG) the chain is Stromal. Residues 842 to 862 (LLLGLFFMTVGMSIDPKLLLA) traverse the membrane as a helical segment. The Chloroplast intermembrane portion of the chain corresponds to 863 to 865 (NFP). A helical transmembrane segment spans residues 866-886 (LIMGTLGLLLVGKTILVVIIG). Topologically, residues 887–898 (KLFGISIISAVR) are stromal. A helical membrane pass occupies residues 899 to 919 (VGLLLAPGGEFAFVAFGEAVN). Residues 920–928 (QGIMTPQLS) lie on the Chloroplast intermembrane side of the membrane. A helical transmembrane segment spans residues 929-949 (SLLFLVVGISMALTPWLAAGG). Topologically, residues 950-1174 (QLIASRFELQ…NQIIEGTLAI (225 aa)) are stromal. The RCK N-terminal domain occupies 975–1092 (QGHIIICGFG…EKAGATAVVP (118 aa)). The segment at 1141 to 1174 (SLGYGFSRSTSKPKPPSPSETSDDNQIIEGTLAI) is disordered.

Belongs to the monovalent cation:proton antiporter 2 (CPA2) transporter (TC 2.A.37) family. KEA (TC 2.A.37.1) subfamily. Post-translationally, acetylated at Lys-170 by the stromal acetyltransferase enzyme NSI. Detected in leaves, stems and flowers. Expressed in shoots and roots. Mainly localized to leaf veins, hypocotyls, mesophylls and guard cells. Accumulates at high levels in small and dividing plastids (at protein level).

The protein localises to the plastid. Its subcellular location is the chloroplast inner membrane. The protein resides in the plastid inner membrane. It catalyses the reaction K(+)(in) + H(+)(out) = K(+)(out) + H(+)(in). With respect to regulation, repressed by sodium ions Na(+). Functionally, electroneutral K(+)/H(+) efflux antiporter modulating monovalent cation and pH homeostasis in plastids, especially during plastid division and thylakoid membrane formation. Transports K(+) and Cs(+) preferentially relative to Na(+) or Li(+). May function in osmotic adjustment. Collaboratively with KEA1, adjusts alkaline stromal pH upon light to dark transitions in plastids. Together with KEA1, critical for chloroplast development, including chloroplast RNA-metabolism (e.g. rRNA maturation, polysome loading and RNA-protein interactions) and plastid gene expression (PGE), ion homeostasis, and photosynthesis. Contributes, during early seedling development, to the regulation of photosynthesis and abscisic acid- (ABA-) mediated primary root growth in a sucrose-dependent manner. Involved in the regulation of reactive oxygen and nitrogen species (ROS and RNS) metabolism. Required in roots for rapid hyperosmotic-induced Ca(2+) responses and for osmo-sensory potentiation in hyperosmotic conditions. May counteract resilience to drought and salt stress, involving photorespiratory pathway and stomata closure. The sequence is that of K(+) efflux antiporter 2, chloroplastic from Arabidopsis thaliana (Mouse-ear cress).